Reading from the N-terminus, the 914-residue chain is Polyribonucleotide nucleotidyltransferase (914 aa).

A disordered region spans residues 407–427 (YMHNYEMPPYSTGETGRVGSP). The Mg(2+) site is built by D521 and D527. A KH domain is found at 587–646 (PRIITTSVPVEKIGEVIGPKGKMINQIQEDTGAEIAIEDDGTVFISSEGGEAAKKAKSII). An S1 motif domain is found at 658–730 (GETYNGKVVK…DRGKISLAIP (73 aa)). Residues 727 to 914 (LAIPGFEDQE…VRRDFDPFED (188 aa)) are disordered. Composition is skewed to basic and acidic residues over residues 742–789 (SRGD…RRSD), 797–865 (DRPR…DRRG), and 873–899 (RGSD…ERTE).

Belongs to the polyribonucleotide nucleotidyltransferase family. Mg(2+) serves as cofactor.

It is found in the cytoplasm. The enzyme catalyses RNA(n+1) + phosphate = RNA(n) + a ribonucleoside 5'-diphosphate. Its function is as follows. Involved in mRNA degradation. Catalyzes the phosphorolysis of single-stranded polyribonucleotides processively in the 3'- to 5'-direction. The polypeptide is Polyribonucleotide nucleotidyltransferase (Bifidobacterium longum subsp. infantis (strain ATCC 15697 / DSM 20088 / JCM 1222 / NCTC 11817 / S12)).